An 82-amino-acid polypeptide reads, in one-letter code: HQQFHCPSAEGNQVKKVFSCKNCDKTYVSLGALKMHIRTHTLPCKCPICGKAFSRPWLLQGHIRTHTGEKPFSCQHCQSAFV.

4 C2H2-type zinc fingers span residues 1–5 (HQQFH), 18–40 (FSCKNCDKTYVSLGALKMHIRTH), 44–66 (CKCPICGKAFSRPWLLQGHIRTH), and 72–82 (FSCQHCQSAFV).

Belongs to the snail C2H2-type zinc-finger protein family.

Its subcellular location is the nucleus. This chain is Escargot/snail protein homolog, found in Calliphora vicina (Blue blowfly).